The chain runs to 556 residues: Vetispiradiene synthase 1 (556 aa).

5 residues coordinate Mg(2+): aspartate 309, aspartate 313, aspartate 452, threonine 456, and glutamate 460. Residues 309 to 313 (DDTFD) carry the DDXXD motif motif.

The protein belongs to the terpene synthase family. Tpsa subfamily. It depends on Mg(2+) as a cofactor.

Its subcellular location is the cytoplasm. The catalysed reaction is (2E,6E)-farnesyl diphosphate = (-)-vetispiradiene + diphosphate. Its pathway is secondary metabolite biosynthesis; terpenoid biosynthesis. Sesquiterpene synthase that catalyzes the formation of vetispiradiene from trans,trans-farnesyl diphosphate. The initial internal cyclization produces the monocyclic intermediate germacrene A. The polypeptide is Vetispiradiene synthase 1 (PVS1) (Solanum tuberosum (Potato)).